Consider the following 973-residue polypeptide: DENN domain-containing protein C297.05 (973 aa).

The span at 69–79 shows a compositional bias: polar residues; the sequence is AHHNTTGSNSV. The interval 69 to 136 is disordered; the sequence is AHHNTTGSNS…YHSRKPYSEP (68 aa). Residues S134 and S318 each carry the phosphoserine modification. A uDENN domain is found at 169–427; it reads ALPLFAATHP…NICCDVPLPP (259 aa). One can recognise a cDENN domain in the interval 449-586; that stretch reads VNEIPGWNDV…LRSKLQAHLK (138 aa). The 332-residue stretch at 588–919 folds into the dDENN domain; sequence AAPLHDKFYV…DRCELDLNDP (332 aa). The disordered stretch occupies residues 693 to 713; the sequence is RNFSSPPFTRPASPSSSKFRF. At S726 the chain carries Phosphoserine. The disordered stretch occupies residues 729–750; it reads SPYSVPELRSSESNQNKAGSIN. Residues 739–750 are compositionally biased toward polar residues; it reads SESNQNKAGSIN.

The protein localises to the cytoplasm. Its subcellular location is the nucleus. This chain is DENN domain-containing protein C297.05, found in Schizosaccharomyces pombe (strain 972 / ATCC 24843) (Fission yeast).